The sequence spans 378 residues: MKHHLIEHRGEQTPGTAVGMASPDAAEESTGVCWPGGAMRRNESSPRPGPAFLPDDDIYLAARAQGVLGWSSSPSSQSSSEYQSYSQYQSWDSSKSEEQQETPPESVCALYTHVQTVRGVAVAWETDDGFEPVTRKPLIREAEFIKRQRRKGSSFEMASNTDLRWELEDCKHYCPQTEDPVDCCMQELRAPPDWLVTTNHGLRCVACCRVFPTLEALLDHAQHGIQDGFSCQIFFEEMLERKRTRDQKQDQQPVEEEQSLSDSSECTRLLTKVLPWQQQPQQQPQEQQKQQQQQQQKQRQQEQQQHQQQQQQPQPLKQQQQQQQQQPLQPQPLKQQPLQPLQPQPQPQPQKQQQRQQQRQQQPPRQQQKQQPLQQQGK.

Disordered stretches follow at residues 1–56, 244–265, and 277–378; these read MKHH…LPDD, TRDQ…DSSE, and QQQP…QQGK. Low complexity-rich tracts occupy residues 277-339 and 349-378; these read QQQP…QPLQ and PQKQ…QQGK.

It belongs to the FAM170 family. In terms of assembly, interacts with GOPC. In terms of tissue distribution, exclusively expressed in adult testis (at protein level). Expression first started at postnatal week 3 in round spermatids, elongated spermatids and mature sperm.

The protein localises to the cytoplasmic vesicle. It localises to the secretory vesicle. The protein resides in the acrosome. It is found in the acrosome outer membrane. Plays a role in fertilization through the acrosome reaction. The chain is Protein FAM170B from Mus musculus (Mouse).